We begin with the raw amino-acid sequence, 229 residues long: Prolactin (229 aa).

A signal peptide spans 1–30; the sequence is MDKKRSSLKGSLLLLLLLVSDLLLCKSVAS. Cys-34 and Cys-41 are disulfide-bonded. Ser-56 carries the phosphoserine modification. Asn-61 carries an N-linked (GlcNAc...) asparagine; partial glycan. Phosphoserine occurs at positions 64 and 120. 2 disulfides stabilise this stretch: Cys-88–Cys-204 and Cys-221–Cys-229.

This sequence belongs to the somatotropin/prolactin family. Interacts with PRLR.

The protein resides in the secreted. Functionally, prolactin acts primarily on the mammary gland by promoting lactation. This chain is Prolactin (PRL), found in Equus caballus (Horse).